The following is a 602-amino-acid chain: Cholinesterase (602 aa).

Positions 1–28 (MQSRSTVIYIRFVLWFLLLWVLFEKSHT) are cleaved as a signal peptide. 2 N-linked (GlcNAc...) asparagine glycosylation sites follow: Asn-85 and Asn-134. 144–145 (GS) contributes to the substrate binding site. The active-site Acyl-ester intermediate is the Ser-226. Phosphoserine is present on Ser-226. Asn-269 and Asn-284 each carry an N-linked (GlcNAc...) asparagine glycan. Glu-353 (charge relay system) is an active-site residue. The N-linked (GlcNAc...) asparagine glycan is linked to Asn-369. Catalysis depends on His-466, which acts as the Charge relay system. Asn-483, Asn-509, Asn-513, and Asn-514 each carry an N-linked (GlcNAc...) asparagine glycan.

Belongs to the type-B carboxylesterase/lipase family. In terms of assembly, homotetramer; disulfide-linked. Dimer of dimers. Present in most cells except erythrocytes.

The protein resides in the secreted. It carries out the reaction an acylcholine + H2O = a carboxylate + choline + H(+). Its function is as follows. Esterase with broad substrate specificity. Contributes to the inactivation of the neurotransmitter acetylcholine. Can degrade neurotoxic organophosphate esters. In Bos taurus (Bovine), this protein is Cholinesterase (BCHE).